We begin with the raw amino-acid sequence, 392 residues long: Branched-chain-amino-acid aminotransferase, mitochondrial (392 aa).

The transit peptide at 1–27 directs the protein to the mitochondrion; that stretch reads MAAAALGQIWARKFLSVPWLLCGPRRY. Tyr168 contacts substrate. At Lys229 the chain carries N6-(pyridoxal phosphate)lysine. Lys321 bears the N6-acetyllysine mark.

Belongs to the class-IV pyridoxal-phosphate-dependent aminotransferase family. Homodimer. Requires pyridoxal 5'-phosphate as cofactor.

The protein localises to the mitochondrion. It catalyses the reaction L-leucine + 2-oxoglutarate = 4-methyl-2-oxopentanoate + L-glutamate. The catalysed reaction is L-isoleucine + 2-oxoglutarate = (S)-3-methyl-2-oxopentanoate + L-glutamate. It carries out the reaction L-valine + 2-oxoglutarate = 3-methyl-2-oxobutanoate + L-glutamate. Functionally, catalyzes the first reaction in the catabolism of the essential branched chain amino acids leucine, isoleucine, and valine. May also function as a transporter of branched chain alpha-keto acids. This is Branched-chain-amino-acid aminotransferase, mitochondrial (BCAT2) from Pongo abelii (Sumatran orangutan).